The sequence spans 265 residues: Thioredoxin-related transmembrane protein 2 homolog (265 aa).

A signal peptide spans Met-1–Ser-32. Over Thr-33 to Arg-96 the chain is Extracellular. The chain crosses the membrane as a helical span at residues Ala-97 to Pro-117. Residues Glu-118–Asp-265 are Cytoplasmic-facing. In terms of domain architecture, Thioredoxin spans Gln-126–Ala-230. Residues Lys-262–Asp-265 carry the Di-lysine motif motif.

The protein localises to the membrane. The protein is Thioredoxin-related transmembrane protein 2 homolog of Caenorhabditis elegans.